A 387-amino-acid chain; its full sequence is Chorismate synthase (387 aa).

NADP(+) is bound by residues Arg39 and Arg45. The disordered stretch occupies residues 92-113; the sequence is PVEEGSEEKRRVSRPRPGHADL. FMN contacts are provided by residues 130–132, 250–251, Gly295, 310–314, and Arg336; these read RSS, QA, and KPIPT.

Belongs to the chorismate synthase family. Homotetramer. It depends on FMNH2 as a cofactor.

It catalyses the reaction 5-O-(1-carboxyvinyl)-3-phosphoshikimate = chorismate + phosphate. The protein operates within metabolic intermediate biosynthesis; chorismate biosynthesis; chorismate from D-erythrose 4-phosphate and phosphoenolpyruvate: step 7/7. Catalyzes the anti-1,4-elimination of the C-3 phosphate and the C-6 proR hydrogen from 5-enolpyruvylshikimate-3-phosphate (EPSP) to yield chorismate, which is the branch point compound that serves as the starting substrate for the three terminal pathways of aromatic amino acid biosynthesis. This reaction introduces a second double bond into the aromatic ring system. The sequence is that of Chorismate synthase from Brevibacillus brevis (strain 47 / JCM 6285 / NBRC 100599).